The sequence spans 617 residues: Acetolactate synthase large subunit (617 aa).

A thiamine diphosphate-binding site is contributed by Glu71. Residues Arg173, 281–302, and 324–343 contribute to the FAD site; these read HGTA…VGAR and EIDP…VLGD. Residues 413–492 form a thiamine pyrophosphate binding region; sequence QHQMWAAQHL…VKVVIVNNHW (80 aa). Mg(2+)-binding residues include Asp463 and Asn490.

It belongs to the TPP enzyme family. As to quaternary structure, dimer of large and small chains. Requires Mg(2+) as cofactor. Thiamine diphosphate serves as cofactor.

It carries out the reaction 2 pyruvate + H(+) = (2S)-2-acetolactate + CO2. The protein operates within amino-acid biosynthesis; L-isoleucine biosynthesis; L-isoleucine from 2-oxobutanoate: step 1/4. Its pathway is amino-acid biosynthesis; L-valine biosynthesis; L-valine from pyruvate: step 1/4. In Parasynechococcus marenigrum (strain WH8102), this protein is Acetolactate synthase large subunit (ilvB).